Here is an 89-residue protein sequence, read N- to C-terminus: Small ribosomal subunit protein bS16 (89 aa).

The protein belongs to the bacterial ribosomal protein bS16 family.

The polypeptide is Small ribosomal subunit protein bS16 (Chloroflexus aggregans (strain MD-66 / DSM 9485)).